Consider the following 427-residue polypeptide: Ectoine TRAP transporter large permease protein TeaC (427 aa).

12 consecutive transmembrane segments (helical) span residues 13 to 35, 49 to 69, 79 to 99, 103 to 123, 147 to 167, 172 to 192, 216 to 236, 237 to 257, 273 to 293, 320 to 340, 356 to 376, and 400 to 420; these read LLLG…FMMF, MAGI…AADI, LINM…VSTA, TLFG…GSPL, IAFL…SGTS, FIAG…YCVI, LALW…GGIF, SPTE…FVVF, GLIT…SWII, ICVA…ILVL, VLVG…PPFG, and FIFM…IALF.

The protein belongs to the TRAP transporter large permease family. In terms of assembly, the complex comprises the extracytoplasmic solute receptor protein TeaA, and the two transmembrane proteins TeaB and TeaC.

The protein localises to the cell inner membrane. Functionally, part of the tripartite ATP-independent periplasmic (TRAP) transport system TeaABC involved in the uptake of ectoine and hydroxyectoine in response to osmotic upshock. Probably functions as a recovery system for synthesized ectoine that leaks out of the cell. The polypeptide is Ectoine TRAP transporter large permease protein TeaC (teaC) (Halomonas elongata (strain ATCC 33173 / DSM 2581 / NBRC 15536 / NCIMB 2198 / 1H9)).